Here is a 329-residue protein sequence, read N- to C-terminus: Beta-ketoacyl-[acyl-carrier-protein] synthase III (329 aa).

Catalysis depends on residues Cys123 and His256. An ACP-binding region spans residues 257–261; the sequence is QANIR. Asn286 is a catalytic residue.

The protein belongs to the thiolase-like superfamily. FabH family. In terms of assembly, homodimer.

The protein localises to the cytoplasm. It catalyses the reaction malonyl-[ACP] + acetyl-CoA + H(+) = 3-oxobutanoyl-[ACP] + CO2 + CoA. Its pathway is lipid metabolism; fatty acid biosynthesis. Catalyzes the condensation reaction of fatty acid synthesis by the addition to an acyl acceptor of two carbons from malonyl-ACP. Catalyzes the first condensation reaction which initiates fatty acid synthesis and may therefore play a role in governing the total rate of fatty acid production. Possesses both acetoacetyl-ACP synthase and acetyl transacylase activities. Its substrate specificity determines the biosynthesis of branched-chain and/or straight-chain of fatty acids. The chain is Beta-ketoacyl-[acyl-carrier-protein] synthase III from Paraburkholderia phymatum (strain DSM 17167 / CIP 108236 / LMG 21445 / STM815) (Burkholderia phymatum).